The sequence spans 271 residues: Putative F-box protein L165 (271 aa).

An F-box domain is found at 4–49; that stretch reads ICELFDDVILEIMNLLSDTDKINFMFCCSRFYYFIDLVYYNDIYDY. Positions 251-271 are disordered; it reads NIPKIVPKNTHYRNSSKKYRY. Residues 260-271 show a composition bias toward basic residues; that stretch reads THYRNSSKKYRY.

This Acanthamoeba polyphaga mimivirus (APMV) protein is Putative F-box protein L165.